Here is a 427-residue protein sequence, read N- to C-terminus: Inward rectifier potassium channel 2 (427 aa).

The Cytoplasmic portion of the chain corresponds to 1-81 (MGSVRTNRYS…IFTTCVDIRW (81 aa)). At C76 the chain carries S-nitrosocysteine. The helical transmembrane segment at 82–106 (RWMLVIFCLAFVLSWLFFGCVFWLI) threads the bilayer. The Extracellular portion of the chain corresponds to 107 to 128 (ALLHGDLDASKESKACVSEVNS). Residues 129 to 140 (FTAAFLFSIETQ) constitute an intramembrane region (helical; Pore-forming). The segment at residues 141 to 147 (TTIGYGF) is an intramembrane region (pore-forming). Positions 142 to 147 (TIGYGF) match the Selectivity filter motif. Residues 148-156 (RCVTDECPI) are Extracellular-facing. Residues 157 to 178 (AVFMVVFQSIVGCIIDAFIIGA) form a helical membrane-spanning segment. The Cytoplasmic segment spans residues 179–427 (VMAKMAKPKK…PRPLRRESEI (249 aa)). Residues 181–208 (AKMAKPKKRNETLVFSHNAVIAMRDGKL) are polyphosphoinositide (PIP2)-binding. The interval 383–427 (TSKEEEDSENGVPESTSTDSPPGIDLHNQASVPLEPRPLRRESEI) is disordered. The PDZ-binding motif lies at 425–427 (SEI).

The protein belongs to the inward rectifier-type potassium channel (TC 1.A.2.1) family. KCNJ2 subfamily. In terms of assembly, homotetramer. Homomultimeric and heteromultimeric association with KCNJ4/Kir2.3. Can form heteromeric channels with Kir2.6/KCNJ18. Associates, via its PDZ-recognition domain, with a complex containing LIN7A, LIN7B, LIN7C, DLG1, CASK and APBA1. Post-translationally, S-nitrosylation increases the open probability and inward rectifying currents. Prominently expressed in the central nervous system. Also found in other excitable tissues such as heart and skeletal muscle.

It localises to the cell membrane. The protein localises to the sarcolemma. The protein resides in the T-tubule. The catalysed reaction is K(+)(in) = K(+)(out). With respect to regulation, activated by phosphatidylinositol 4,5 biphosphate (PtdIns(4,5)P2). Inward rectifier potassium channels are characterized by a greater tendency to allow potassium to flow into the cell rather than out of it. Their voltage dependence is regulated by the concentration of extracellular potassium; as external potassium is raised, the voltage range of the channel opening shifts to more positive voltages. The inward rectification is mainly due to the blockage of outward current by internal magnesium. Can be blocked by extracellular barium and cesium. Probably participates in establishing action potential waveform and excitability of neuronal and muscle tissues. The polypeptide is Inward rectifier potassium channel 2 (Kcnj2) (Rattus norvegicus (Rat)).